Here is a 199-residue protein sequence, read N- to C-terminus: Recombination protein RecR (199 aa).

The C4-type zinc finger occupies 58–73 (CSVCTNLTDRDPCRIC). The Toprim domain occupies 81 to 176 (AVICVVEEPR…KVTRIAHGLP (96 aa)).

The protein belongs to the RecR family.

Its function is as follows. May play a role in DNA repair. It seems to be involved in an RecBC-independent recombinational process of DNA repair. It may act with RecF and RecO. The polypeptide is Recombination protein RecR (Heliobacterium modesticaldum (strain ATCC 51547 / Ice1)).